The primary structure comprises 260 residues: Proliferating cell nuclear antigen (260 aa).

Residues 61 to 80 (RCDRNLSMGMNLGSMAKILK) mediate DNA binding.

The protein belongs to the PCNA family. In terms of assembly, homotrimer. Forms a complex with activator 1 heteropentamer in the presence of ATP. Interacts with E2f. Interacts with the catalytic subunits of two DNA polymerase complexes: PolD1 from the delta complex and PolE1/DNApol-epsilon255 from the epsilon complex. In terms of tissue distribution, expressed at high levels in adult ovary.

It is found in the nucleus. It localises to the chromosome. Its subcellular location is the cytoplasm. In terms of biological role, likely to be an auxiliary protein of DNA polymerase delta complex and is probably involved in the control of DNA replication and repair by increasing the polymerase's processibility. The sequence is that of Proliferating cell nuclear antigen from Drosophila melanogaster (Fruit fly).